The chain runs to 239 residues: Uridylate kinase (239 aa).

Residue 12-15 participates in ATP binding; sequence KLSG. Glycine 54 lines the UMP pocket. Positions 55 and 59 each coordinate ATP. Residues aspartate 74 and 135 to 142 each bind UMP; that span reads TGNPYFTT. ATP contacts are provided by threonine 162, tyrosine 168, and aspartate 171.

Belongs to the UMP kinase family. As to quaternary structure, homohexamer.

The protein localises to the cytoplasm. The catalysed reaction is UMP + ATP = UDP + ADP. It functions in the pathway pyrimidine metabolism; CTP biosynthesis via de novo pathway; UDP from UMP (UMPK route): step 1/1. Inhibited by UTP. Its function is as follows. Catalyzes the reversible phosphorylation of UMP to UDP. In Fusobacterium nucleatum subsp. nucleatum (strain ATCC 25586 / DSM 15643 / BCRC 10681 / CIP 101130 / JCM 8532 / KCTC 2640 / LMG 13131 / VPI 4355), this protein is Uridylate kinase.